Here is a 498-residue protein sequence, read N- to C-terminus: MAKYAAAIDQGTTSTRCMIFDHSGNVICYDQKEHEQIYPRPGWVEHSPDEIWERTQSVIRGALSKGGLSASDIVAVGITNQRETTVVWNRKTGRPVYNAIVWQDTRTDQICNELAADGGQDRFRPKVGLPLATYFSGPKIRWILDNVPGAREAAEAGDVVFGNIDTFLTWWLTGGPNGGVHVTDVTNASRTMLMNLETLDWDDEILGIMGIPRQMLPKIVPSSMVYGTATGELAGVPVAGILGDQQAAMVGQTCFDVGEAKNTYGTGSFMLLNTGTKLVPSKSGLLTTVCYKFGDQPAVYALEGSIAITGALVQWLRDNLGLITSSAEVEALANLVEDNGGIYFVPAFSGLFAPYWRSDARGVIVGLTRYVNKDHLARAVLEATAYQTREVLDAMEQDSGVKLTALKVDGGMVYNNTLMQFQADILGVPVIRPKVAETTSLGAAYAAGLAVGFWSNTDEMRANWGVDHTWTPQMDEATRERLYRGWKKAVTRTFDWVE.

T12 lines the ADP pocket. 3 residues coordinate ATP: T12, T13, and S14. T12 serves as a coordination point for sn-glycerol 3-phosphate. An ADP-binding site is contributed by R16. Residues R82, E83, Y134, and D244 each contribute to the sn-glycerol 3-phosphate site. Glycerol is bound by residues R82, E83, Y134, D244, and Q245. ADP is bound by residues T266 and G310. ATP is bound by residues T266, G310, Q314, and G411. 2 residues coordinate ADP: G411 and N415.

It belongs to the FGGY kinase family.

It catalyses the reaction glycerol + ATP = sn-glycerol 3-phosphate + ADP + H(+). It participates in polyol metabolism; glycerol degradation via glycerol kinase pathway; sn-glycerol 3-phosphate from glycerol: step 1/1. With respect to regulation, inhibited by fructose 1,6-bisphosphate (FBP). Functionally, key enzyme in the regulation of glycerol uptake and metabolism. Catalyzes the phosphorylation of glycerol to yield sn-glycerol 3-phosphate. This chain is Glycerol kinase, found in Chloroflexus aurantiacus (strain ATCC 29366 / DSM 635 / J-10-fl).